Reading from the N-terminus, the 271-residue chain is MSDSPERVYPMLLDFVRKETISKNLLRVTLTGEDLIGFPEDQNGSHIKVFFPNQASGILQLPVREGDNVIWPEHKPVPRAYSVRQYRAAVNELDIDFVTHGEETPGGGWALKADIGSQIGLIGPAGPDPLIEPADWHIIAGDLSAVPAISAILEKLPSDAKGYVFIEVDEIEDIHDLVHPEEMAINWLMRNPHDTEPALAKAIKQLPSPEKATSLSAFIAGENQSVINCRKILRNDYQIARDKLYAIPYWKRGKTEEAYHDERHDVMDAVY.

The 124-residue stretch at 8–131 (VYPMLLDFVR…IGPAGPDPLI (124 aa)) folds into the FAD-binding FR-type domain.

It belongs to the SIP oxidoreductase family. In terms of assembly, monomer. The cofactor is FAD.

The protein localises to the cytoplasm. The enzyme catalyses 2 a Fe(II)-siderophore + NAD(+) + H(+) = 2 a Fe(III)-siderophore + NADH. Ferric-siderophore reductase involved in iron removal from the siderophores after their transport into the cell. Acts as a major ferric-vulnibactin reductase catalyzing the reduction of Fe(3+)-vulnibactin, a catecholate siderophore synthesized by V.vulnificus. Catalyzes reduction of Fe(3+)-aerobactin, a citrate-hydroxamate siderophore produced by other bacteria, in the absence of IutB. Catalyzes reduction of Fe(3+)-vibriobactin in vitro. No activity with ferrioxamine B or Fe(3+)-enterobactin. Catalyzes reduction of ferric chelating compounds Fe(3+)-nitrilotriacetic acid (NTA), Fe(3+)-citrate and Fe(3+)-EDTA as well as non-complexed FeCl3 in the presence of NADH as its electron donor and FAD as its cofactor in vitro. Highest activity with Fe(3+)-NTA as electron acceptor. The sequence is that of Ferric vulnibactin reductase VuuB from Vibrio vulnificus.